A 419-amino-acid chain; its full sequence is L-rhamnose isomerase (419 aa).

Mn(2+) is bound by residues His262, Asp294, and Asp296.

Belongs to the rhamnose isomerase family. As to quaternary structure, homotetramer. It depends on Mn(2+) as a cofactor.

The protein resides in the cytoplasm. The enzyme catalyses L-rhamnopyranose = L-rhamnulose. It participates in carbohydrate degradation; L-rhamnose degradation; glycerone phosphate from L-rhamnose: step 1/3. Catalyzes the interconversion of L-rhamnose and L-rhamnulose. The sequence is that of L-rhamnose isomerase from Escherichia fergusonii (strain ATCC 35469 / DSM 13698 / CCUG 18766 / IAM 14443 / JCM 21226 / LMG 7866 / NBRC 102419 / NCTC 12128 / CDC 0568-73).